The primary structure comprises 355 residues: Cyclic nucleotide-gated potassium channel RHE_CH03180 (355 aa).

Residues 1 to 12 lie on the Cytoplasmic side of the membrane; sequence MSAVPFSKISTP. A helical membrane pass occupies residues 13–30; sequence LNALFATIGLLVVAALTT. Residues 31 to 38 are Periplasmic-facing; that stretch reads QGLTGQER. A helical transmembrane segment spans residues 39–61; that stretch reads LVFELLLAAIWLAYVLQLSGTLL. The Cytoplasmic portion of the chain corresponds to 62–73; that stretch reads SRRRRLSGEMTA. The helical transmembrane segment at 74–93 threads the bilayer; that stretch reads LVIDLLAVLVPAAAFLFVGS. The chain crosses the membrane as a helical span at residues 94–111; it reads RDRDLYCAIWLLKPLRDS. Residues 112–128 are Cytoplasmic-facing; sequence TFFRLLAKVVANESRNL. Residues 129-149 traverse the membrane as a helical segment; that stretch reads LGVTSVFGIVLFGAALAGYII. The Periplasmic segment spans residues 150–160; sequence ERDVQPDKFGS. The segment at residues 161–179 is an intramembrane region (pore-forming); it reads IPQAMWWAVVTLSTTGYGD. The Selectivity filter motif lies at 174-179; it reads TTGYGD. Over 180–184 the chain is Periplasmic; the sequence is EIPQS. The chain crosses the membrane as a helical span at residues 185–209; that stretch reads LAGRVLAGLVMMSGIGIFALWAGIL. Residues 210-355 are Cytoplasmic-facing; sequence ATGFYEEVRR…LERRGGPPKE (146 aa). Residues 297-298, 307-308, and Arg348 contribute to the 3',5'-cyclic AMP site; these read GE and RS.

The protein belongs to the potassium channel family. Homotetramer.

The protein localises to the cell membrane. Functionally, cyclic nucleotide-regulated potassium channel activated by cAMP. This chain is Cyclic nucleotide-gated potassium channel RHE_CH03180, found in Rhizobium etli (strain ATCC 51251 / DSM 11541 / JCM 21823 / NBRC 15573 / CFN 42).